We begin with the raw amino-acid sequence, 371 residues long: Lipoyl synthase, mitochondrial (371 aa).

The N-terminal 24 residues, 1–24, are a transit peptide targeting the mitochondrion; the sequence is MLSRFKCSRLQLQKRAISVTKATT. Polar residues predominate over residues 20 to 29; it reads TKATTTTASQ. Residues 20–42 are disordered; sequence TKATTTTASQPKRRRTTTFSDAL. [4Fe-4S] cluster is bound by residues C107, C112, C118, C138, C142, C145, and S353. A Radical SAM core domain is found at 121–342; the sequence is GGDSSKATAT…RDKALELGFL (222 aa).

The protein belongs to the radical SAM superfamily. Lipoyl synthase family. Requires [4Fe-4S] cluster as cofactor.

Its subcellular location is the mitochondrion. The catalysed reaction is [[Fe-S] cluster scaffold protein carrying a second [4Fe-4S](2+) cluster] + N(6)-octanoyl-L-lysyl-[protein] + 2 oxidized [2Fe-2S]-[ferredoxin] + 2 S-adenosyl-L-methionine + 4 H(+) = [[Fe-S] cluster scaffold protein] + N(6)-[(R)-dihydrolipoyl]-L-lysyl-[protein] + 4 Fe(3+) + 2 hydrogen sulfide + 2 5'-deoxyadenosine + 2 L-methionine + 2 reduced [2Fe-2S]-[ferredoxin]. It participates in protein modification; protein lipoylation via endogenous pathway; protein N(6)-(lipoyl)lysine from octanoyl-[acyl-carrier-protein]: step 2/2. In terms of biological role, catalyzes the radical-mediated insertion of two sulfur atoms into the C-6 and C-8 positions of the octanoyl moiety bound to the lipoyl domains of lipoate-dependent enzymes, thereby converting the octanoylated domains into lipoylated derivatives. This is Lipoyl synthase, mitochondrial from Lachancea thermotolerans (strain ATCC 56472 / CBS 6340 / NRRL Y-8284) (Yeast).